A 463-amino-acid chain; its full sequence is Asparagine--tRNA ligase (463 aa).

This sequence belongs to the class-II aminoacyl-tRNA synthetase family. In terms of assembly, homodimer.

It is found in the cytoplasm. The enzyme catalyses tRNA(Asn) + L-asparagine + ATP = L-asparaginyl-tRNA(Asn) + AMP + diphosphate + H(+). The chain is Asparagine--tRNA ligase from Bacillus cereus (strain ZK / E33L).